Reading from the N-terminus, the 212-residue chain is Shuttling pre-60S factor ECM1 (212 aa).

Disordered stretches follow at residues 28 to 48 (KISKNSRAARQSDALEPEVKD) and 188 to 212 (SLAEDNTVQKTPTNRFGVLPDDVEE). The residue at position 188 (Ser188) is a Phosphoserine. The span at 191-201 (EDNTVQKTPTN) shows a compositional bias: polar residues.

It belongs to the ECM1 family. In terms of assembly, associates with the pre-60S ribosomal particle and the nucleopore complex.

Its subcellular location is the nucleus. It is found in the nucleolus. The protein resides in the cytoplasm. Its function is as follows. Pre-ribosomal factor involved in 60S ribosomal protein subunit export from the nucleus. This Saccharomyces cerevisiae (strain ATCC 204508 / S288c) (Baker's yeast) protein is Shuttling pre-60S factor ECM1 (ECM1).